We begin with the raw amino-acid sequence, 616 residues long: Homeodomain-interacting protein kinase 4 (616 aa).

One can recognise a Protein kinase domain in the interval 11–347 (YDIIEVLGKG…PSAALRHPFV (337 aa)). Residues 17 to 25 (LGKGTFGEV) and lysine 40 contribute to the ATP site. Catalysis depends on aspartate 136, which acts as the Proton acceptor. The interval 486 to 616 (HKARKPPAGS…SFLQHVTGHH (131 aa)) is disordered. Positions 496 to 511 (KSDSNFSNLIRLSQVS) are enriched in polar residues. Serine 511 carries the post-translational modification Phosphoserine.

This sequence belongs to the protein kinase superfamily. CMGC Ser/Thr protein kinase family. HIPK subfamily. In terms of processing, autophosphorylated.

Its subcellular location is the cytoplasm. It catalyses the reaction L-seryl-[protein] + ATP = O-phospho-L-seryl-[protein] + ADP + H(+). It carries out the reaction L-threonyl-[protein] + ATP = O-phospho-L-threonyl-[protein] + ADP + H(+). Protein kinase that phosphorylates human TP53 at Ser-9, and thus induces TP53 repression of BIRC5 promoter. May act as a corepressor of transcription factors (Potential). In Homo sapiens (Human), this protein is Homeodomain-interacting protein kinase 4 (HIPK4).